The primary structure comprises 158 residues: Transcription factor BTF3 homolog 4 (158 aa).

The residue at position 5 (Lys-5) is an N6-methyllysine. An NAC-A/B domain is found at 33–98; it reads TADDKKLQSS…AEAKPITEML (66 aa). The residue at position 111 (Thr-111) is a Phosphothreonine. Positions 122-158 are disordered; the sequence is RQVLDSKAPKPEDIDEEDDDVPDLVENFDEASKNEAN. Over residues 134-150 the composition is skewed to acidic residues; sequence DIDEEDDDVPDLVENFD.

It belongs to the NAC-beta family.

The sequence is that of Transcription factor BTF3 homolog 4 (BTF3L4) from Homo sapiens (Human).